The sequence spans 304 residues: WW domain-binding protein 1 (304 aa).

The tract at residues 1–26 (MARASSRNSSEEAWGSLQAPQQQQSP) is disordered. 2 short sequence motifs (PPxY motif) span residues 159 to 162 (PPAY) and 172 to 176 (PPPPY). Disordered stretches follow at residues 206 to 235 (TNVE…VHIP) and 252 to 304 (CPCP…GDIP). Residues 209–218 (EGVSSQQSAL) show a composition bias toward polar residues.

In terms of assembly, binds to the WW domain of YAP1, WWP1 and WWP2. Interacts with WWOX. Interacts with NEDD4.

This is WW domain-binding protein 1 (Wbp1) from Mus musculus (Mouse).